Consider the following 157-residue polypeptide: 2-C-methyl-D-erythritol 2,4-cyclodiphosphate synthase (157 aa).

A divalent metal cation-binding residues include aspartate 8 and histidine 10. 4-CDP-2-C-methyl-D-erythritol 2-phosphate-binding positions include aspartate 8–histidine 10 and histidine 34–serine 35. Residue histidine 42 coordinates a divalent metal cation. 4-CDP-2-C-methyl-D-erythritol 2-phosphate-binding positions include aspartate 56 to glycine 58, threonine 132 to glutamate 135, phenylalanine 139, and arginine 142.

It belongs to the IspF family. Homotrimer. A divalent metal cation serves as cofactor.

It carries out the reaction 4-CDP-2-C-methyl-D-erythritol 2-phosphate = 2-C-methyl-D-erythritol 2,4-cyclic diphosphate + CMP. It participates in isoprenoid biosynthesis; isopentenyl diphosphate biosynthesis via DXP pathway; isopentenyl diphosphate from 1-deoxy-D-xylulose 5-phosphate: step 4/6. Its function is as follows. Involved in the biosynthesis of isopentenyl diphosphate (IPP) and dimethylallyl diphosphate (DMAPP), two major building blocks of isoprenoid compounds. Catalyzes the conversion of 4-diphosphocytidyl-2-C-methyl-D-erythritol 2-phosphate (CDP-ME2P) to 2-C-methyl-D-erythritol 2,4-cyclodiphosphate (ME-CPP) with a corresponding release of cytidine 5-monophosphate (CMP). The protein is 2-C-methyl-D-erythritol 2,4-cyclodiphosphate synthase of Symbiobacterium thermophilum (strain DSM 24528 / JCM 14929 / IAM 14863 / T).